Consider the following 444-residue polypeptide: MSRKYFGTDGIRGEVGTSPITPDFVLRLGHAVGRVLRGTHDRPVVLIGKDTRISGYMLESALEAGLNSAGVDVMLTGPLPTPAVAYLTRALRLSLGVVISASHNHFMDNGIKFFSARGEKLSDAWEMEVEAAIEAPPQWSDSSQIGRARRLHDAPGRYVEFCKSTFSNELSLKGLKIVVDAANGAAYHVAPDVFHELGADVVRIGCEPDGLNINDGVGATSPQALVEAVRMNGADYGVALDGDADRVLLVDRNGRLYNGDELLYVMVADRLAQGEPVPGAVGTLMTNMAVEVALQQRGVEFVRAKVGDRYVLEELVSRGWQLGGEGSGHLLALDKHTTGDGIVSALQVLQAQQRNGRSIAELLDGVELFPQTLINVRLAAGQDWKLNDRLARERIAIGNELGQSGRVLIRPSGTEPLLRVMVEARDAAQARLCADRLAVAAQEG.

The active-site Phosphoserine intermediate is the Ser102. The Mg(2+) site is built by Ser102, Asp241, Asp243, and Asp245. Ser102 bears the Phosphoserine mark.

The protein belongs to the phosphohexose mutase family. Mg(2+) is required as a cofactor. In terms of processing, activated by phosphorylation.

The enzyme catalyses alpha-D-glucosamine 1-phosphate = D-glucosamine 6-phosphate. Functionally, catalyzes the conversion of glucosamine-6-phosphate to glucosamine-1-phosphate. The polypeptide is Phosphoglucosamine mutase (Leptothrix cholodnii (strain ATCC 51168 / LMG 8142 / SP-6) (Leptothrix discophora (strain SP-6))).